The sequence spans 418 residues: Glutamyl-tRNA reductase (418 aa).

Substrate contacts are provided by residues 49–52 (TCNR), Ser109, 114–116 (EPQ), and Gln120. Cys50 serves as the catalytic Nucleophile. 189 to 194 (GAGETI) is a binding site for NADP(+).

This sequence belongs to the glutamyl-tRNA reductase family. As to quaternary structure, homodimer.

It catalyses the reaction (S)-4-amino-5-oxopentanoate + tRNA(Glu) + NADP(+) = L-glutamyl-tRNA(Glu) + NADPH + H(+). The protein operates within porphyrin-containing compound metabolism; protoporphyrin-IX biosynthesis; 5-aminolevulinate from L-glutamyl-tRNA(Glu): step 1/2. In terms of biological role, catalyzes the NADPH-dependent reduction of glutamyl-tRNA(Glu) to glutamate 1-semialdehyde (GSA). The protein is Glutamyl-tRNA reductase of Pectobacterium atrosepticum (strain SCRI 1043 / ATCC BAA-672) (Erwinia carotovora subsp. atroseptica).